The sequence spans 561 residues: DNA ligase B (561 aa).

Lysine 125 acts as the N6-AMP-lysine intermediate in catalysis.

It belongs to the NAD-dependent DNA ligase family. LigB subfamily.

It carries out the reaction NAD(+) + (deoxyribonucleotide)n-3'-hydroxyl + 5'-phospho-(deoxyribonucleotide)m = (deoxyribonucleotide)n+m + AMP + beta-nicotinamide D-nucleotide.. Catalyzes the formation of phosphodiester linkages between 5'-phosphoryl and 3'-hydroxyl groups in double-stranded DNA using NAD as a coenzyme and as the energy source for the reaction. This Salmonella gallinarum (strain 287/91 / NCTC 13346) protein is DNA ligase B.